The chain runs to 188 residues: 2-amino-4-hydroxy-6-hydroxymethyldihydropteridine pyrophosphokinase (188 aa).

This sequence belongs to the HPPK family.

It catalyses the reaction 6-hydroxymethyl-7,8-dihydropterin + ATP = (7,8-dihydropterin-6-yl)methyl diphosphate + AMP + H(+). Its pathway is cofactor biosynthesis; tetrahydrofolate biosynthesis; 2-amino-4-hydroxy-6-hydroxymethyl-7,8-dihydropteridine diphosphate from 7,8-dihydroneopterin triphosphate: step 4/4. Catalyzes the transfer of pyrophosphate from adenosine triphosphate (ATP) to 6-hydroxymethyl-7,8-dihydropterin, an enzymatic step in folate biosynthesis pathway. This is 2-amino-4-hydroxy-6-hydroxymethyldihydropteridine pyrophosphokinase (folK) from Mycobacterium tuberculosis (strain ATCC 25618 / H37Rv).